A 430-amino-acid polypeptide reads, in one-letter code: Tol-Pal system protein TolB (430 aa).

The N-terminal stretch at 1-21 (MKQALRVAFGFLILWASVLHA) is a signal peptide.

It belongs to the TolB family. In terms of assembly, the Tol-Pal system is composed of five core proteins: the inner membrane proteins TolA, TolQ and TolR, the periplasmic protein TolB and the outer membrane protein Pal. They form a network linking the inner and outer membranes and the peptidoglycan layer.

Its subcellular location is the periplasm. In terms of biological role, part of the Tol-Pal system, which plays a role in outer membrane invagination during cell division and is important for maintaining outer membrane integrity. TolB occupies a key intermediary position in the Tol-Pal system because it communicates directly with both membrane-embedded components, Pal in the outer membrane and TolA in the inner membrane. In Shigella boydii serotype 18 (strain CDC 3083-94 / BS512), this protein is Tol-Pal system protein TolB.